Reading from the N-terminus, the 326-residue chain is Putative HTH-type transcriptional regulatory protein MMP0678 (326 aa).

The HTH cro/C1-type domain occupies 128-183 (LRETREKLKISVGELAEVSRVSRKTIYKYEQNEANPSAEVAIKIEEYLDVPLIKGI). The H-T-H motif DNA-binding region spans 139-158 (VGELAEVSRVSRKTIYKYEQ).

This is Putative HTH-type transcriptional regulatory protein MMP0678 from Methanococcus maripaludis (strain DSM 14266 / JCM 13030 / NBRC 101832 / S2 / LL).